A 288-amino-acid chain; its full sequence is Phosphatidate cytidylyltransferase (288 aa).

The next 7 membrane-spanning stretches (helical) occupy residues 10–30, 52–72, 89–109, 118–138, 152–172, 192–212, and 223–243; these read IVLI…YFAL, PLIR…WLYT, LLLI…ISYP, NPLL…AGVL, GLFL…GAYF, WEGV…FIHF, and ITGF…GDLT.

This sequence belongs to the CDS family.

It localises to the cell inner membrane. It catalyses the reaction a 1,2-diacyl-sn-glycero-3-phosphate + CTP + H(+) = a CDP-1,2-diacyl-sn-glycerol + diphosphate. It participates in phospholipid metabolism; CDP-diacylglycerol biosynthesis; CDP-diacylglycerol from sn-glycerol 3-phosphate: step 3/3. This chain is Phosphatidate cytidylyltransferase (cdsA), found in Haemophilus influenzae (strain ATCC 51907 / DSM 11121 / KW20 / Rd).